A 657-amino-acid chain; its full sequence is UvrABC system protein B (657 aa).

The 139-residue stretch at alanine 25–asparagine 163 folds into the Helicase ATP-binding domain. Glycine 38–threonine 45 is an ATP binding site. The Beta-hairpin signature appears at tyrosine 91–isoleucine 114. The short motif at leucine 130 to aspartate 133 is the DEAD box element. The Helicase C-terminal domain occupies glutamine 433–leucine 599. A UVR domain is found at alanine 622–leucine 657.

The protein belongs to the UvrB family. In terms of assembly, forms a heterotetramer with UvrA during the search for lesions. Interacts with UvrC in an incision complex.

It is found in the cytoplasm. Its function is as follows. The UvrABC repair system catalyzes the recognition and processing of DNA lesions. A damage recognition complex composed of 2 UvrA and 2 UvrB subunits scans DNA for abnormalities. Upon binding of the UvrA(2)B(2) complex to a putative damaged site, the DNA wraps around one UvrB monomer. DNA wrap is dependent on ATP binding by UvrB and probably causes local melting of the DNA helix, facilitating insertion of UvrB beta-hairpin between the DNA strands. Then UvrB probes one DNA strand for the presence of a lesion. If a lesion is found the UvrA subunits dissociate and the UvrB-DNA preincision complex is formed. This complex is subsequently bound by UvrC and the second UvrB is released. If no lesion is found, the DNA wraps around the other UvrB subunit that will check the other stand for damage. This Campylobacter hominis (strain ATCC BAA-381 / DSM 21671 / CCUG 45161 / LMG 19568 / NCTC 13146 / CH001A) protein is UvrABC system protein B.